Reading from the N-terminus, the 428-residue chain is Serine--tRNA ligase (428 aa).

L-serine is bound at residue 231-233; it reads TAE. Position 262-264 (262-264) interacts with ATP; it reads RSE. Glutamate 285 lines the L-serine pocket. 349 to 352 is a binding site for ATP; the sequence is EISS. Serine 385 is a binding site for L-serine.

This sequence belongs to the class-II aminoacyl-tRNA synthetase family. Type-1 seryl-tRNA synthetase subfamily. Homodimer. The tRNA molecule binds across the dimer.

The protein resides in the cytoplasm. The catalysed reaction is tRNA(Ser) + L-serine + ATP = L-seryl-tRNA(Ser) + AMP + diphosphate + H(+). It carries out the reaction tRNA(Sec) + L-serine + ATP = L-seryl-tRNA(Sec) + AMP + diphosphate + H(+). Its pathway is aminoacyl-tRNA biosynthesis; selenocysteinyl-tRNA(Sec) biosynthesis; L-seryl-tRNA(Sec) from L-serine and tRNA(Sec): step 1/1. In terms of biological role, catalyzes the attachment of serine to tRNA(Ser). Is also able to aminoacylate tRNA(Sec) with serine, to form the misacylated tRNA L-seryl-tRNA(Sec), which will be further converted into selenocysteinyl-tRNA(Sec). The protein is Serine--tRNA ligase of Cellvibrio japonicus (strain Ueda107) (Pseudomonas fluorescens subsp. cellulosa).